The chain runs to 758 residues: Long-chain-alcohol oxidase FAO1 (758 aa).

A run of 2 helical transmembrane segments spans residues 102 to 122 (IVLRILTFRLGTLLLCGLVCL) and 155 to 175 (PLARIGFMMIKAIFLFYYFTW). 246-261 (CDAVVVGSGCGGGVAA) is a binding site for FAD. His-689 serves as the catalytic Proton acceptor.

Belongs to the GMC oxidoreductase family.

The protein resides in the membrane. It catalyses the reaction a long-chain primary fatty alcohol + O2 = a long-chain fatty aldehyde + H2O2. Its function is as follows. Long-chain fatty alcohol oxidase involved in the omega-oxidation pathway of lipid degradation. In Arabidopsis thaliana (Mouse-ear cress), this protein is Long-chain-alcohol oxidase FAO1 (FAO1).